The following is a 431-amino-acid chain: MGNQLQLLPENEEEEEDDMETEDRDGEDVEKPSIINFDTSLPTSHAYLGSDMEEFHGRTLHDEDSVQNLPVLPHVALILIPGQTLPLQLFRPQEVSMFRNLVSQDRTFAVLAHSPDPSGTETKAEFGTTAEIYAFREEQEYGIETVKIKAVGRQRFRVHDIRTQADGIRQAKVQILPERILPDPLCALQFLPRLHTHSPQTKHTQTTPPQKRCSQNYRQKKLHCASMTSWPPWVYSLYDSKTLMSRVKKQLHEWDENLKDESLPTNPTDFSYRVAACLPIDDALRLQLLKIGSAIQRLRCELDIMDRCTSLCCKQCQDTEITSKNEIFSLSLYGPMAAYVNPHGYVHETLTVYKASNLNLIGRPSTLHSWFPGYAWTIAQCRTCSSHMGWKFSAVKKDLSPPRFWGLTRSALLPTIPQGEEGVEGSRLLCL.

The segment at 1–36 is disordered; it reads MGNQLQLLPENEEEEEDDMETEDRDGEDVEKPSIIN. A compositionally biased stretch (acidic residues) spans 10 to 28; the sequence is ENEEEEEDDMETEDRDGED. The Lon N-terminal domain occupies 69-309; sequence LPVLPHVALI…CELDIMDRCT (241 aa). Positions 308-416 constitute a CULT domain; sequence CTSLCCKQCQ…LTRSALLPTI (109 aa). Zn(2+) is bound by residues Cys313 and Cys316. (S)-thalidomide is bound by residues His368, Trp370, and Trp376. Zn(2+)-binding residues include Cys381 and Cys384.

The protein belongs to the CRBN family. As to quaternary structure, component of a DCX (DDB1-CUL4-X-box) protein ligase complex. Highly expressed in brain, head, vasculature otic vesicles and developing pectoral fins.

It localises to the cytoplasm. The protein resides in the nucleus. It participates in protein modification; protein ubiquitination. Its function is as follows. Substrate recognition component of a DCX (DDB1-CUL4-X-box) E3 protein ligase complex that mediates the ubiquitination and subsequent proteasomal degradation of target proteins, such as MEIS2. Normal degradation of key regulatory proteins is required for normal limb outgrowth and expression of the fibroblast growth factor FGF8. Maintains presynaptic glutamate release and consequently cognitive functions, such as memory and learning, by negatively regulating large-conductance calcium-activated potassium (BK) channels in excitatory neurons. Likely to function by regulating the assembly and neuronal surface expression of BK channels via its interaction with KCNT1. May also be involved in regulating anxiety-like behaviors via a BK channel-independent mechanism. The protein is Protein cereblon (crbn) of Danio rerio (Zebrafish).